The following is an 88-amino-acid chain: UPF0473 protein CLL_A1177 (88 aa).

It belongs to the UPF0473 family.

In Clostridium botulinum (strain Eklund 17B / Type B), this protein is UPF0473 protein CLL_A1177.